A 578-amino-acid chain; its full sequence is Sulfite reductase [NADPH] hemoprotein beta-component (578 aa).

[4Fe-4S] cluster-binding residues include C441, C447, C487, and C491. C491 lines the siroheme pocket.

This sequence belongs to the nitrite and sulfite reductase 4Fe-4S domain family. As to quaternary structure, alpha(8)-beta(8). The alpha component is a flavoprotein, the beta component is a hemoprotein. Requires siroheme as cofactor. [4Fe-4S] cluster is required as a cofactor.

The catalysed reaction is hydrogen sulfide + 3 NADP(+) + 3 H2O = sulfite + 3 NADPH + 4 H(+). It participates in sulfur metabolism; hydrogen sulfide biosynthesis; hydrogen sulfide from sulfite (NADPH route): step 1/1. Its function is as follows. Component of the sulfite reductase complex that catalyzes the 6-electron reduction of sulfite to sulfide. This is one of several activities required for the biosynthesis of L-cysteine from sulfate. The chain is Sulfite reductase [NADPH] hemoprotein beta-component from Vibrio vulnificus (strain CMCP6).